We begin with the raw amino-acid sequence, 194 residues long: Putative lipoprotein LppK (194 aa).

The signal sequence occupies residues 1-26; the sequence is MSRWTHRTFFIALSAIVTTAGFGSSG. A lipid anchor (N-palmitoyl cysteine) is attached at Cys-27. Cys-27 is lipidated: S-diacylglycerol cysteine. The segment at 174–194 is disordered; sequence GNSSGLTNPAPIKAPTPTPSH. Residues 185–194 are compositionally biased toward pro residues; the sequence is IKAPTPTPSH.

This sequence belongs to the MTB12 family.

The protein localises to the cell membrane. In Mycobacterium leprae (strain TN), this protein is Putative lipoprotein LppK (lppK).